A 261-amino-acid chain; its full sequence is DNA repair protein RecO (261 aa).

The protein belongs to the RecO family.

Involved in DNA repair and RecF pathway recombination. This Limosilactobacillus reuteri (strain DSM 20016) (Lactobacillus reuteri) protein is DNA repair protein RecO.